The primary structure comprises 121 residues: Ribosome-binding factor A (121 aa).

This sequence belongs to the RbfA family. As to quaternary structure, monomer. Binds 30S ribosomal subunits, but not 50S ribosomal subunits or 70S ribosomes.

Its subcellular location is the cytoplasm. Functionally, one of several proteins that assist in the late maturation steps of the functional core of the 30S ribosomal subunit. Associates with free 30S ribosomal subunits (but not with 30S subunits that are part of 70S ribosomes or polysomes). Required for efficient processing of 16S rRNA. May interact with the 5'-terminal helix region of 16S rRNA. The protein is Ribosome-binding factor A of Clostridium novyi (strain NT).